We begin with the raw amino-acid sequence, 662 residues long: Chaperone protein HtpG (662 aa).

The a; substrate-binding stretch occupies residues 1 to 352 (MSKQTLSFQA…SADLPLNVSR (352 aa)). The segment at 353–594 (ELLQESRDVR…GDGMSTQLAR (242 aa)) is b. The disordered stretch occupies residues 382 to 402 (HDRHDSPAPQPAEGADRVSDV). Residues 595-662 (LLKQAGQQAP…YVKRVNALLV (68 aa)) are c.

It belongs to the heat shock protein 90 family. In terms of assembly, homodimer.

The protein resides in the cytoplasm. Molecular chaperone. Has ATPase activity. The sequence is that of Chaperone protein HtpG from Verminephrobacter eiseniae (strain EF01-2).